Reading from the N-terminus, the 417-residue chain is Calreticulin (417 aa).

The N-terminal stretch at methionine 1–alanine 17 is a signal peptide. An N-domain region spans residues glutamate 18–glutamate 197. Ca(2+) contacts are provided by glutamine 26, lysine 62, and lysine 64. Lysine 64 carries the post-translational modification N6-(2-hydroxyisobutyryl)lysine. The an alpha-D-glucoside site is built by tyrosine 109, lysine 111, tyrosine 128, and aspartate 135. Cysteine 137 and cysteine 163 form a disulfide bridge. The residue at position 159 (lysine 159) is an N6-acetyllysine. One copy of the 1-1 repeat lies at valine 191–phenylalanine 202. Residues valine 191–glutamate 255 are 4 X approximate repeats. The interval serine 193–proline 277 is disordered. The interval aspartate 198–tyrosine 308 is P-domain. Residues lysine 207–glutamate 251 show a composition bias toward basic and acidic residues. Lysine 209 is subject to N6-acetyllysine. Repeat copies occupy residues aspartate 210–glutamate 221, aspartate 227–lysine 238, aspartate 244–glutamate 255, glycine 259–proline 269, glycine 273–proline 283, and glycine 287–proline 297. Positions aspartate 237–glutamate 270 are interaction with PPIB. The segment covering aspartate 252–tryptophan 261 has biased composition (acidic residues). The segment at glycine 259–proline 297 is 3 X approximate repeats. Positions glutamate 309 to leucine 417 are C-domain. An an alpha-D-glucoside-binding site is contributed by aspartate 317. Aspartate 328 lines the Ca(2+) pocket. A disordered region spans residues threonine 350–leucine 417. Residues alanine 352–glutamate 379 show a composition bias toward basic and acidic residues. The span at glutamate 380–alanine 408 shows a compositional bias: acidic residues. Positions lysine 414–leucine 417 match the Prevents secretion from ER motif.

The protein belongs to the calreticulin family. As to quaternary structure, monomer. Component of an EIF2 complex at least composed of CELF1/CUGBP1, CALR, CALR3, EIF2S1, EIF2S2, HSP90B1 and HSPA5. Interacts with PDIA3/ERp57 and SPACA9. Interacts with TRIM21. Interacts with NR3C1. Interacts with PPIB. Interacts (via P-domain) with PDIA5. Interacts with CLCC1. In blastocyst expressed in all blastomeres (at protein level). In embryos, expressed in spleen, kidney, liver, fat, muscle, ovary, granulosa cells and cumulus cells.

The protein resides in the endoplasmic reticulum lumen. It is found in the cytoplasm. The protein localises to the cytosol. It localises to the secreted. Its subcellular location is the extracellular space. The protein resides in the extracellular matrix. It is found in the cell surface. The protein localises to the sarcoplasmic reticulum lumen. It localises to the cytoplasmic vesicle. Its subcellular location is the secretory vesicle. The protein resides in the cortical granule. It is found in the cytolytic granule. Functionally, calcium-binding chaperone that promotes folding, oligomeric assembly and quality control in the endoplasmic reticulum (ER) via the calreticulin/calnexin cycle. This lectin interacts transiently with almost all of the monoglucosylated glycoproteins that are synthesized in the ER. Interacts with the DNA-binding domain of NR3C1 and mediates its nuclear export. Involved in maternal gene expression regulation. May participate in oocyte maturation via the regulation of calcium homeostasis. Present in the cortical granules of non-activated oocytes, is exocytosed during the cortical reaction in response to oocyte activation and might participate in the block to polyspermy. This chain is Calreticulin (CALR), found in Sus scrofa (Pig).